The chain runs to 387 residues: Phosphoglycerate kinase (387 aa).

Residues 21-23 (DLN), Arg36, 59-62 (HLGR), Arg113, and Arg146 contribute to the substrate site. ATP contacts are provided by residues Lys197, Glu314, and 340–343 (GGDT).

This sequence belongs to the phosphoglycerate kinase family. As to quaternary structure, monomer.

The protein resides in the cytoplasm. It carries out the reaction (2R)-3-phosphoglycerate + ATP = (2R)-3-phospho-glyceroyl phosphate + ADP. The protein operates within carbohydrate degradation; glycolysis; pyruvate from D-glyceraldehyde 3-phosphate: step 2/5. This is Phosphoglycerate kinase from Cronobacter sakazakii (strain ATCC BAA-894) (Enterobacter sakazakii).